We begin with the raw amino-acid sequence, 466 residues long: Asparagine--tRNA ligase (466 aa).

Belongs to the class-II aminoacyl-tRNA synthetase family. Homodimer.

The protein localises to the cytoplasm. The enzyme catalyses tRNA(Asn) + L-asparagine + ATP = L-asparaginyl-tRNA(Asn) + AMP + diphosphate + H(+). The sequence is that of Asparagine--tRNA ligase from Sodalis glossinidius (strain morsitans).